Consider the following 281-residue polypeptide: Small ribosomal subunit protein uS3 (281 aa).

The KH type-2 domain occupies 38-106; it reads IRRLLSTGLE…QVQLNILEVK (69 aa). The disordered stretch occupies residues 218–281; that stretch reads APAGAERARR…VTHEPQIAES (64 aa). A compositionally biased stretch (low complexity) spans 238 to 252; the sequence is SGAAGTTVTGTDAGR.

This sequence belongs to the universal ribosomal protein uS3 family. As to quaternary structure, part of the 30S ribosomal subunit. Forms a tight complex with proteins S10 and S14.

Functionally, binds the lower part of the 30S subunit head. Binds mRNA in the 70S ribosome, positioning it for translation. This Mycobacterium leprae (strain TN) protein is Small ribosomal subunit protein uS3.